The following is a 209-amino-acid chain: Small ribosomal subunit protein uS4 (209 aa).

Residues 1–13 (MSTKSRTRSKTRL) show a composition bias toward basic residues. Disordered regions lie at residues 1–20 (MSTK…LGIP) and 28–49 (YLEK…QDSD). Residues 95-160 (QRLDALVVRS…TEPFQVAAAG (66 aa)) form the S4 RNA-binding domain.

The protein belongs to the universal ribosomal protein uS4 family. Part of the 30S ribosomal subunit. Contacts protein S5. The interaction surface between S4 and S5 is involved in control of translational fidelity.

Its function is as follows. One of the primary rRNA binding proteins, it binds directly to 16S rRNA where it nucleates assembly of the body of the 30S subunit. With S5 and S12 plays an important role in translational accuracy. The polypeptide is Small ribosomal subunit protein uS4 (Clavibacter sepedonicus (Clavibacter michiganensis subsp. sepedonicus)).